The following is a 248-amino-acid chain: Ubiquinone/menaquinone biosynthesis C-methyltransferase UbiE (248 aa).

Residues serine 68, aspartate 92, and 120–121 contribute to the S-adenosyl-L-methionine site; that span reads NA.

Belongs to the class I-like SAM-binding methyltransferase superfamily. MenG/UbiE family.

It catalyses the reaction a 2-demethylmenaquinol + S-adenosyl-L-methionine = a menaquinol + S-adenosyl-L-homocysteine + H(+). The enzyme catalyses a 2-methoxy-6-(all-trans-polyprenyl)benzene-1,4-diol + S-adenosyl-L-methionine = a 5-methoxy-2-methyl-3-(all-trans-polyprenyl)benzene-1,4-diol + S-adenosyl-L-homocysteine + H(+). It functions in the pathway quinol/quinone metabolism; menaquinone biosynthesis; menaquinol from 1,4-dihydroxy-2-naphthoate: step 2/2. Its pathway is cofactor biosynthesis; ubiquinone biosynthesis. In terms of biological role, methyltransferase required for the conversion of demethylmenaquinol (DMKH2) to menaquinol (MKH2) and the conversion of 2-polyprenyl-6-methoxy-1,4-benzoquinol (DDMQH2) to 2-polyprenyl-3-methyl-6-methoxy-1,4-benzoquinol (DMQH2). In Rickettsia typhi (strain ATCC VR-144 / Wilmington), this protein is Ubiquinone/menaquinone biosynthesis C-methyltransferase UbiE.